Here is a 166-residue protein sequence, read N- to C-terminus: Orotate phosphoribosyltransferase (166 aa).

5-phospho-alpha-D-ribose 1-diphosphate-binding positions include Arg83, Lys84, His89, and 109–117 (DDVATTGGS). 2 residues coordinate orotate: Thr113 and Arg141.

Belongs to the purine/pyrimidine phosphoribosyltransferase family. PyrE subfamily. In terms of assembly, homodimer. Mg(2+) is required as a cofactor.

It carries out the reaction orotidine 5'-phosphate + diphosphate = orotate + 5-phospho-alpha-D-ribose 1-diphosphate. The protein operates within pyrimidine metabolism; UMP biosynthesis via de novo pathway; UMP from orotate: step 1/2. Its function is as follows. Catalyzes the transfer of a ribosyl phosphate group from 5-phosphoribose 1-diphosphate to orotate, leading to the formation of orotidine monophosphate (OMP). This is Orotate phosphoribosyltransferase from Picrophilus torridus (strain ATCC 700027 / DSM 9790 / JCM 10055 / NBRC 100828 / KAW 2/3).